The primary structure comprises 382 residues: 1-deoxy-D-xylulose 5-phosphate reductoisomerase (382 aa).

Residues Thr10, Gly11, Ser12, Ile13, Gly36, Lys37, Asn38, and Asn121 each contribute to the NADPH site. Lys122 lines the 1-deoxy-D-xylulose 5-phosphate pocket. Glu123 contributes to the NADPH binding site. Position 147 (Asp147) interacts with Mn(2+). Positions 148, 149, 173, and 196 each coordinate 1-deoxy-D-xylulose 5-phosphate. A Mn(2+)-binding site is contributed by Glu149. Gly202 contributes to the NADPH binding site. The 1-deoxy-D-xylulose 5-phosphate site is built by Ser209, Asn214, Lys215, and Glu218. Glu218 is a binding site for Mn(2+).

Belongs to the DXR family. Mg(2+) serves as cofactor. The cofactor is Mn(2+).

It carries out the reaction 2-C-methyl-D-erythritol 4-phosphate + NADP(+) = 1-deoxy-D-xylulose 5-phosphate + NADPH + H(+). It functions in the pathway isoprenoid biosynthesis; isopentenyl diphosphate biosynthesis via DXP pathway; isopentenyl diphosphate from 1-deoxy-D-xylulose 5-phosphate: step 1/6. In terms of biological role, catalyzes the NADPH-dependent rearrangement and reduction of 1-deoxy-D-xylulose-5-phosphate (DXP) to 2-C-methyl-D-erythritol 4-phosphate (MEP). This chain is 1-deoxy-D-xylulose 5-phosphate reductoisomerase, found in Halalkalibacterium halodurans (strain ATCC BAA-125 / DSM 18197 / FERM 7344 / JCM 9153 / C-125) (Bacillus halodurans).